We begin with the raw amino-acid sequence, 289 residues long: 2,3-dimethylmalate lyase (289 aa).

This sequence belongs to the isocitrate lyase/PEP mutase superfamily. Homotetramer. The cofactor is Mg(2+).

It carries out the reaction (2R,3S)-2,3-dimethylmalate = propanoate + pyruvate. The protein operates within cofactor degradation; nicotinate degradation; propanoate and pyruvate from 6-hydroxynicotinate: step 8/8. Its activity is regulated as follows. Completely inhibited by propionic anhydride and by cystamine. Irreversibly inhibited by the mercapto reagents iodoacetate and iodoacetamide. Unaffected by hydroxylamine. Functionally, catalyzes the formation of proponate and pyruvate from (2R,3S)-2,3-dimethylmalate. Has no activity toward dimethylmaleate, malate, citramalate, isocitrate and citrate. This chain is 2,3-dimethylmalate lyase, found in Eubacterium barkeri (Clostridium barkeri).